Here is a 329-residue protein sequence, read N- to C-terminus: Carbohydrate sulfotransferase chst-1 (329 aa).

The Cytoplasmic portion of the chain corresponds to 1–3; sequence MLK. A helical; Signal-anchor for type II membrane protein membrane pass occupies residues 4 to 23; it reads WFIISCCLLTAISYSTYYLF. At 24 to 329 the chain is on the lumenal side; the sequence is TSNSWIKTVK…FDFDTTFINS (306 aa). 3'-phosphoadenylyl sulfate-binding positions include 91–97 and 157–165; these read KKSMSTL and RDPIARFIS.

It belongs to the sulfotransferase 2 family. As to expression, highly expressed in the head and tail of hermaphrodites, in particular in amphid and phasmid sheath cells.

It is found in the golgi apparatus membrane. It carries out the reaction chondroitin beta-D-glucuronate + n 3'-phosphoadenylyl sulfate = chondroitin 4'-sulfate + n adenosine 3',5'-bisphosphate + n H(+). Functionally, catalyzes the transfer of sulfate to position 4 of non-reducing N-acetylgalactosamine (GalNAc) residue of chondroitin. The chain is Carbohydrate sulfotransferase chst-1 from Caenorhabditis elegans.